We begin with the raw amino-acid sequence, 191 residues long: Large ribosomal subunit protein eL6 (191 aa).

It belongs to the eukaryotic ribosomal protein eL6 family.

This chain is Large ribosomal subunit protein eL6 (RPL6), found in Tetrahymena thermophila (strain SB210).